The primary structure comprises 994 residues: Protein translocase subunit SecA (994 aa).

ATP-binding positions include glutamine 85, 103 to 107 (GEGKT), and aspartate 492. Low complexity predominate over residues 868–888 (IPDGAGPVADAQPVRPAAARQ). The tract at residues 868-994 (IPDGAGPVAD…HGDPARRNTE (127 aa)) is disordered. Residues 889–900 (TPPPPSPVPSAP) show a composition bias toward pro residues. 4 residues coordinate Zn(2+): cysteine 973, cysteine 975, cysteine 984, and histidine 985. Residues 984–994 (CHGDPARRNTE) show a composition bias toward basic and acidic residues.

This sequence belongs to the SecA family. Monomer and homodimer. Part of the essential Sec protein translocation apparatus which comprises SecA, SecYEG and auxiliary proteins SecDF. Other proteins may also be involved. The cofactor is Zn(2+).

It is found in the cell membrane. It localises to the cytoplasm. It catalyses the reaction ATP + H2O + cellular proteinSide 1 = ADP + phosphate + cellular proteinSide 2.. Its function is as follows. Part of the Sec protein translocase complex. Interacts with the SecYEG preprotein conducting channel. Has a central role in coupling the hydrolysis of ATP to the transfer of proteins into and across the cell membrane, serving as an ATP-driven molecular motor driving the stepwise translocation of polypeptide chains across the membrane. This is Protein translocase subunit SecA from Frankia casuarinae (strain DSM 45818 / CECT 9043 / HFP020203 / CcI3).